Here is an 848-residue protein sequence, read N- to C-terminus: Probable disease resistance protein At5g43730 (848 aa).

Residues 25 to 62 are a coiled coil; the sequence is SNYIHLMESNLDALQKTMEELKNGRDDLLARVSIEEDK. An NB-ARC domain is found at 137–439; that stretch reads VAQKIIPKAE…CEGYINPNRY (303 aa). 179–186 lines the ATP pocket; sequence GMGGIGKT. LRR repeat units follow at residues 534-555, 558-580, 582-604, 605-627, and 629-649; these read NLSTLLLPYNKLVDISVGFFLF, KLVVLDLSTNWSLIELPEEISNL, SLQYLNLSLTGIKSLPVGLKKLR, KLIYLNLEFTNVLESLVGIATTL, and NLQVLKLFYSLFCVDDIIMEE.

The protein belongs to the disease resistance NB-LRR family.

Probable disease resistance protein. This chain is Probable disease resistance protein At5g43730, found in Arabidopsis thaliana (Mouse-ear cress).